The sequence spans 423 residues: Gamma-glutamyl phosphate reductase (423 aa).

The protein belongs to the gamma-glutamyl phosphate reductase family.

It is found in the cytoplasm. The catalysed reaction is L-glutamate 5-semialdehyde + phosphate + NADP(+) = L-glutamyl 5-phosphate + NADPH + H(+). The protein operates within amino-acid biosynthesis; L-proline biosynthesis; L-glutamate 5-semialdehyde from L-glutamate: step 2/2. In terms of biological role, catalyzes the NADPH-dependent reduction of L-glutamate 5-phosphate into L-glutamate 5-semialdehyde and phosphate. The product spontaneously undergoes cyclization to form 1-pyrroline-5-carboxylate. This chain is Gamma-glutamyl phosphate reductase, found in Burkholderia vietnamiensis (strain G4 / LMG 22486) (Burkholderia cepacia (strain R1808)).